The chain runs to 174 residues: I-Kappa-B like protein C1 (174 aa).

2 ANK repeats span residues Arg-56 to Ala-88 and Thr-93 to Ala-123.

This sequence belongs to the polydnaviridae I-Kappa-B-like protein family.

Suppresses the host immune response through NF-kappa-B inactivation. Possesses ankyrin repeat domains required for NF-kappa-B binding but lacks the regulatory regions required for dissociation from NF-kappa-B and degradation. Therefore, prevents host NF-kappa-B release and subsequent activation. The chain is I-Kappa-B like protein C1 (C1) from Microplitis demolitor bracovirus (isolate Webb) (MdBV).